The following is a 315-amino-acid chain: Aspartate carbamoyltransferase catalytic subunit (315 aa).

Residues Arg65 and Thr66 each contribute to the carbamoyl phosphate site. L-aspartate is bound at residue Lys93. Residues Arg115, His145, and Gln148 each contribute to the carbamoyl phosphate site. Residues Arg179 and Arg234 each coordinate L-aspartate. 2 residues coordinate carbamoyl phosphate: Gly275 and Pro276.

Belongs to the aspartate/ornithine carbamoyltransferase superfamily. ATCase family. In terms of assembly, heterododecamer (2C3:3R2) of six catalytic PyrB chains organized as two trimers (C3), and six regulatory PyrI chains organized as three dimers (R2).

It catalyses the reaction carbamoyl phosphate + L-aspartate = N-carbamoyl-L-aspartate + phosphate + H(+). Its pathway is pyrimidine metabolism; UMP biosynthesis via de novo pathway; (S)-dihydroorotate from bicarbonate: step 2/3. In terms of biological role, catalyzes the condensation of carbamoyl phosphate and aspartate to form carbamoyl aspartate and inorganic phosphate, the committed step in the de novo pyrimidine nucleotide biosynthesis pathway. In Xanthomonas euvesicatoria pv. vesicatoria (strain 85-10) (Xanthomonas campestris pv. vesicatoria), this protein is Aspartate carbamoyltransferase catalytic subunit.